We begin with the raw amino-acid sequence, 665 residues long: Probable potassium transport system protein Kup 2 (665 aa).

13 helical membrane passes run 13 to 33 (GLLV…LYVM), 55 to 75 (ISLI…LIAL), 98 to 118 (WLVL…TLTP), 138 to 158 (IPVP…LFLF), 167 to 187 (IIGK…GLTG), 195 to 215 (LSLL…SPAN), 217 to 237 (VGVL…ALYS), 250 to 270 (SWPY…VWIL), 295 to 315 (FFAI…LITG), 344 to 364 (IFIP…VFLF), 375 to 395 (GLAI…YLSL), 400 to 420 (ILLR…FLIS), and 428 to 448 (GGYV…IWYF).

It belongs to the HAK/KUP transporter (TC 2.A.72) family.

It localises to the cell membrane. It carries out the reaction K(+)(in) + H(+)(in) = K(+)(out) + H(+)(out). Functionally, transport of potassium into the cell. Likely operates as a K(+):H(+) symporter. The chain is Probable potassium transport system protein Kup 2 from Lactobacillus johnsonii (strain CNCM I-12250 / La1 / NCC 533).